A 365-amino-acid polypeptide reads, in one-letter code: PDZ and LIM domain protein 3 (365 aa).

A PDZ domain is found at 1-84 (MPQNVILPGP…QLCLKIDRAE (84 aa)). Phosphoserine is present on S18. The disordered stretch occupies residues 126-156 (FIIPGRSSGCSTPSGIDGGSGRSTPSSVSTL). A compositionally biased stretch (polar residues) spans 147–156 (RSTPSSVSTL). Residues 293–352 (PLCDKCGSGIVGAVVKARDKYRHPECFVCADCNLNLKQKGYFFVEGELYCETHARARMRP) form the LIM zinc-binding domain.

In terms of assembly, interacts with ACTN2. Forms a heterodimer with PDLIM4 (via LIM domain).

Its subcellular location is the cytoplasm. It is found in the myofibril. The protein resides in the sarcomere. It localises to the z line. Functionally, may play a role in the organization of actin filament arrays within muscle cells. The sequence is that of PDZ and LIM domain protein 3 (PDLIM3) from Sus scrofa (Pig).